We begin with the raw amino-acid sequence, 218 residues long: Riboflavin synthase (218 aa).

Lumazine-binding repeat units lie at residues 1 to 97 (MFTG…LGGH) and 98 to 194 (LVSG…EKLI). 2,4-dihydroxypteridine is bound by residues 4–6 (GII), 48–50 (CLT), 62–67 (DLSLET), 101–103 (GHV), Lys-136, 145–147 (SLT), and 159–164 (TIVPHT).

Homotrimer.

The catalysed reaction is 2 6,7-dimethyl-8-(1-D-ribityl)lumazine + H(+) = 5-amino-6-(D-ribitylamino)uracil + riboflavin. The protein operates within cofactor biosynthesis; riboflavin biosynthesis; riboflavin from 2-hydroxy-3-oxobutyl phosphate and 5-amino-6-(D-ribitylamino)uracil: step 2/2. Functionally, catalyzes the dismutation of two molecules of 6,7-dimethyl-8-ribityllumazine, resulting in the formation of riboflavin and 5-amino-6-(D-ribitylamino)uracil. In Photobacterium leiognathi, this protein is Riboflavin synthase (ribE).